The chain runs to 679 residues: Recombination repair protein 1 (679 aa).

The segment at 1 to 407 (MPRVKAVKKQ…TKKAKKAETK (407 aa)) is disordered. The segment covering 45-55 (AKGKPRARKAT) has biased composition (basic residues). Residues 106 to 116 (ATAEAEPEPKV) show a composition bias toward basic and acidic residues. Phosphothreonine is present on residues T133 and T140. A Phosphoserine modification is found at S142. Composition is skewed to basic and acidic residues over residues 179 to 189 (EPPKQRARKEA) and 203 to 214 (SKEKVQKAETAA). S258 carries the phosphoserine modification. The segment covering 312–347 (KKEGKEPAPGKKQKKSADKENGVVEEEAKPSTETKP) has biased composition (basic and acidic residues). An AP endonuclease region spans residues 428–679 (KICSWNVAGL…HCPITIFFNI (252 aa)). Residue E461 coordinates Mg(2+). Y533 is a catalytic residue. Mg(2+) contacts are provided by D572, N574, and D669. D572 acts as the Proton donor/acceptor in catalysis.

It belongs to the DNA repair enzymes AP/ExoA family. In terms of assembly, interacts with the zeta DNA polymerase complex; interacts (via the N-terminus) with the accessory subunit PolZ2/Rev7 and also interacts with the catalytic component PolZ1, however the interaction with PolZ1 is likely via PolZ2. Mg(2+) is required as a cofactor. The cofactor is Mn(2+).

The protein resides in the nucleus. It carries out the reaction Exonucleolytic cleavage in the 3'- to 5'-direction to yield nucleoside 5'-phosphates.. Its function is as follows. Plays a role in the cellular response to oxidative stress by promoting DNA repair mechanisms such as base excision repair and possibly homologous recombination repair. Functions as an apurinic/apyrimidinic (AP) endodeoxyribonuclease in the DNA base excision repair (BER) pathway of DNA lesions induced by oxidative and alkylating agents. Likely to initiate repair of AP sites in DNA by catalyzing hydrolytic incision of the phosphodiester backbone immediately adjacent to the damage, generating a single-strand break with 5'-deoxyribose phosphate and 3'-hydroxyl ends. Has a 3'-5' exoribonuclease activity on mismatched deoxyribonucleotides at the 3' termini of nicked or gapped DNA molecules during short-patch BER. Has apurinic endonuclease and double-stranded DNA 3'-exonuclease activities and carries out single-stranded DNA renaturation in a Mg(2+)-dependent manner. Activity is more efficient in purine-rich regions of dsDNA than in pyrimidine-rich regions. This Drosophila melanogaster (Fruit fly) protein is Recombination repair protein 1.